A 158-amino-acid polypeptide reads, in one-letter code: MQRYPMTPQGHAALEAELKQLKSIDRPRITASIAEAREHGDLKENAEYHAAREQQGFCEARIRDIEAKLGGAQIIDPATLPKDGRVIFGVSVVIENMDTEEEKQYKIVGDDEADFKAGKISVNSPIARGLIGKSEGDEARIETPKGVVEYEIMKVIYD.

This sequence belongs to the GreA/GreB family.

Its function is as follows. Necessary for efficient RNA polymerase transcription elongation past template-encoded arresting sites. The arresting sites in DNA have the property of trapping a certain fraction of elongating RNA polymerases that pass through, resulting in locked ternary complexes. Cleavage of the nascent transcript by cleavage factors such as GreA or GreB allows the resumption of elongation from the new 3'terminus. GreA releases sequences of 2 to 3 nucleotides. In Psychrobacter arcticus (strain DSM 17307 / VKM B-2377 / 273-4), this protein is Transcription elongation factor GreA.